A 466-amino-acid chain; its full sequence is MSNNTDLSPVHVIGGGLAGSEAAWQIAQAGVPVVLHEMRPVRGTDAHKTEQLAELVCSNSFRSDDAETNAVGVLHAEMRLAGSLIMACADAHQVPAGGALAVDREGFSQAVTARLEAHPLITIEREEITGLPPTEWGTTIIATGPLTAPSLAEAIAAETDADALAFFDAIAPIIHFDSINMDVCWFQSRYDKVGPGGTGKDYINCPMDKEQYEAFVAALIEGDKTDFKEWEGTPYFDGCLPIEVMAERGPETLRHGPMKPMGLTNAHNPTVKPYAVVQLRQDNALGTLYNMVGFQTKLKYGSQTGIFKMIPGLENAEFARLGGLHRNTYLNSPVLLDNVLRLKSRQTLRFAGQVTGCEGYVESSAIGLLAGRFTAAEKLSQAAVPPPPTTAFGALLGHITGGHIVTDDEPGKRSFQPMNVNFGLFPPVDVPKPEGKRLRGKEKTIAKKRALSARALADCRNWLSLY.

14 to 19 serves as a coordination point for FAD; sequence GGGLAG.

Belongs to the MnmG family. TrmFO subfamily. FAD serves as cofactor.

It localises to the cytoplasm. It carries out the reaction uridine(54) in tRNA + (6R)-5,10-methylene-5,6,7,8-tetrahydrofolate + NADH + H(+) = 5-methyluridine(54) in tRNA + (6S)-5,6,7,8-tetrahydrofolate + NAD(+). It catalyses the reaction uridine(54) in tRNA + (6R)-5,10-methylene-5,6,7,8-tetrahydrofolate + NADPH + H(+) = 5-methyluridine(54) in tRNA + (6S)-5,6,7,8-tetrahydrofolate + NADP(+). Functionally, catalyzes the folate-dependent formation of 5-methyl-uridine at position 54 (M-5-U54) in all tRNAs. The protein is Methylenetetrahydrofolate--tRNA-(uracil-5-)-methyltransferase TrmFO of Brucella melitensis biotype 1 (strain ATCC 23456 / CCUG 17765 / NCTC 10094 / 16M).